We begin with the raw amino-acid sequence, 187 residues long: Large ribosomal subunit protein bL25 (187 aa).

It belongs to the bacterial ribosomal protein bL25 family. CTC subfamily. In terms of assembly, part of the 50S ribosomal subunit; part of the 5S rRNA/L5/L18/L25 subcomplex. Contacts the 5S rRNA. Binds to the 5S rRNA independently of L5 and L18.

Functionally, this is one of the proteins that binds to the 5S RNA in the ribosome where it forms part of the central protuberance. The chain is Large ribosomal subunit protein bL25 from Tropheryma whipplei (strain TW08/27) (Whipple's bacillus).